Consider the following 594-residue polypeptide: Microtubule-associated protein VP8 (594 aa).

The protein resides in the virion. It is found in the host cytoplasm. The protein localises to the host cytoskeleton. In terms of biological role, minor inner capsid component. Displays NTPase and RNA 5'-triphosphatase (RTPase) activities. May function as a cofactor of polymerase VP1. Associates with microtubules and plays a role in the formation, structural organization and morphology of viral inclusions, where the assembly of cores and the replication of viral RNA occur. The protein is Microtubule-associated protein VP8 (S8) of Saccharum officinarum (Sugarcane).